We begin with the raw amino-acid sequence, 150 residues long: Large ribosomal subunit protein bL9 (150 aa).

It belongs to the bacterial ribosomal protein bL9 family.

Its function is as follows. Binds to the 23S rRNA. The sequence is that of Large ribosomal subunit protein bL9 from Arthrobacter sp. (strain FB24).